The chain runs to 168 residues: MNPFDIRIGQGYDVHALVPGRKLILGGVDIPHDRGLLGHSDADALLHAVTDALFGAAALGDIGRHFPDTDPNFAGADSRVLLREAVRRVREAGYEIGNVDATVIAQKPKLAPHISGMVANLAEDLGLPVTRCNVKAKTNEKLGFEGKEEGIVAQAAVLIYRRNGDAQD.

Asp13 and His15 together coordinate a divalent metal cation. Residues 13-15 (DVH) and 39-40 (HS) each bind 4-CDP-2-C-methyl-D-erythritol 2-phosphate. Residue His47 coordinates a divalent metal cation. Residues 61 to 63 (DIG), 66 to 70 (FPDTD), Phe144, and Lys147 contribute to the 4-CDP-2-C-methyl-D-erythritol 2-phosphate site.

It belongs to the IspF family. As to quaternary structure, homotrimer. A divalent metal cation serves as cofactor.

It catalyses the reaction 4-CDP-2-C-methyl-D-erythritol 2-phosphate = 2-C-methyl-D-erythritol 2,4-cyclic diphosphate + CMP. The protein operates within isoprenoid biosynthesis; isopentenyl diphosphate biosynthesis via DXP pathway; isopentenyl diphosphate from 1-deoxy-D-xylulose 5-phosphate: step 4/6. Involved in the biosynthesis of isopentenyl diphosphate (IPP) and dimethylallyl diphosphate (DMAPP), two major building blocks of isoprenoid compounds. Catalyzes the conversion of 4-diphosphocytidyl-2-C-methyl-D-erythritol 2-phosphate (CDP-ME2P) to 2-C-methyl-D-erythritol 2,4-cyclodiphosphate (ME-CPP) with a corresponding release of cytidine 5-monophosphate (CMP). In Cupriavidus metallidurans (strain ATCC 43123 / DSM 2839 / NBRC 102507 / CH34) (Ralstonia metallidurans), this protein is 2-C-methyl-D-erythritol 2,4-cyclodiphosphate synthase.